We begin with the raw amino-acid sequence, 156 residues long: Cyclic pyranopterin monophosphate synthase (156 aa).

Residues 73–75 (LCH) and 110–111 (ME) contribute to the substrate site. Residue aspartate 125 is part of the active site.

Belongs to the MoaC family. In terms of assembly, homohexamer; trimer of dimers.

The enzyme catalyses (8S)-3',8-cyclo-7,8-dihydroguanosine 5'-triphosphate = cyclic pyranopterin phosphate + diphosphate. Its pathway is cofactor biosynthesis; molybdopterin biosynthesis. Catalyzes the conversion of (8S)-3',8-cyclo-7,8-dihydroguanosine 5'-triphosphate to cyclic pyranopterin monophosphate (cPMP). In Pseudomonas entomophila (strain L48), this protein is Cyclic pyranopterin monophosphate synthase.